A 527-amino-acid chain; its full sequence is Peptide chain release factor 3 (527 aa).

The tr-type G domain maps to 9 to 277 (AKRRTFAIIS…CIVDWAPQPL (269 aa)). Residues 18 to 25 (SHPDAGKT), 86 to 90 (DTPGH), and 140 to 143 (NKLD) each bind GTP.

This sequence belongs to the TRAFAC class translation factor GTPase superfamily. Classic translation factor GTPase family. PrfC subfamily.

It is found in the cytoplasm. Its function is as follows. Increases the formation of ribosomal termination complexes and stimulates activities of RF-1 and RF-2. It binds guanine nucleotides and has strong preference for UGA stop codons. It may interact directly with the ribosome. The stimulation of RF-1 and RF-2 is significantly reduced by GTP and GDP, but not by GMP. This Pseudomonas aeruginosa (strain LESB58) protein is Peptide chain release factor 3.